A 477-amino-acid polypeptide reads, in one-letter code: Ribulose bisphosphate carboxylase large chain (477 aa).

Residues M1 to S2 constitute a propeptide that is removed on maturation. Residue P3 is modified to N-acetylproline. At K14 the chain carries N6,N6,N6-trimethyllysine. N123 and T173 together coordinate substrate. K175 acts as the Proton acceptor in catalysis. A substrate-binding site is contributed by K177. Positions 201, 203, and 204 each coordinate Mg(2+). Residue K201 is modified to N6-carboxylysine. H294 functions as the Proton acceptor in the catalytic mechanism. Residues R295, H327, and S379 each contribute to the substrate site.

Belongs to the RuBisCO large chain family. Type I subfamily. Heterohexadecamer of 8 large chains and 8 small chains; disulfide-linked. The disulfide link is formed within the large subunit homodimers. The cofactor is Mg(2+). The disulfide bond which can form in the large chain dimeric partners within the hexadecamer appears to be associated with oxidative stress and protein turnover.

It is found in the plastid. The protein localises to the chloroplast. It catalyses the reaction 2 (2R)-3-phosphoglycerate + 2 H(+) = D-ribulose 1,5-bisphosphate + CO2 + H2O. The enzyme catalyses D-ribulose 1,5-bisphosphate + O2 = 2-phosphoglycolate + (2R)-3-phosphoglycerate + 2 H(+). Its function is as follows. RuBisCO catalyzes two reactions: the carboxylation of D-ribulose 1,5-bisphosphate, the primary event in carbon dioxide fixation, as well as the oxidative fragmentation of the pentose substrate in the photorespiration process. Both reactions occur simultaneously and in competition at the same active site. The protein is Ribulose bisphosphate carboxylase large chain (rbcL) of Solanum lycopersicum (Tomato).